The sequence spans 291 residues: Elongation factor Ts (291 aa).

The interval 79–82 is involved in Mg(2+) ion dislocation from EF-Tu; it reads TDFV.

Belongs to the EF-Ts family.

Its subcellular location is the cytoplasm. In terms of biological role, associates with the EF-Tu.GDP complex and induces the exchange of GDP to GTP. It remains bound to the aminoacyl-tRNA.EF-Tu.GTP complex up to the GTP hydrolysis stage on the ribosome. This Leuconostoc mesenteroides subsp. mesenteroides (strain ATCC 8293 / DSM 20343 / BCRC 11652 / CCM 1803 / JCM 6124 / NCDO 523 / NBRC 100496 / NCIMB 8023 / NCTC 12954 / NRRL B-1118 / 37Y) protein is Elongation factor Ts.